We begin with the raw amino-acid sequence, 210 residues long: Small ribosomal subunit protein uS3 (210 aa).

The 69-residue stretch at 38-106 (LRSFLKKRLY…EVYLNIQEVR (69 aa)) folds into the KH type-2 domain.

It belongs to the universal ribosomal protein uS3 family. As to quaternary structure, part of the 30S ribosomal subunit. Forms a tight complex with proteins S10 and S14.

In terms of biological role, binds the lower part of the 30S subunit head. Binds mRNA in the 70S ribosome, positioning it for translation. The sequence is that of Small ribosomal subunit protein uS3 from Geotalea uraniireducens (strain Rf4) (Geobacter uraniireducens).